We begin with the raw amino-acid sequence, 103 residues long: Small ribosomal subunit protein uS10 (103 aa).

This sequence belongs to the universal ribosomal protein uS10 family. In terms of assembly, part of the 30S ribosomal subunit.

Involved in the binding of tRNA to the ribosomes. This is Small ribosomal subunit protein uS10 from Cutibacterium acnes (strain DSM 16379 / KPA171202) (Propionibacterium acnes).